The chain runs to 344 residues: Holliday junction branch migration complex subunit RuvB (344 aa).

The tract at residues 1–181 (MERIVTPAEM…FGVLCAMEYY (181 aa)) is large ATPase domain (RuvB-L). ATP contacts are provided by residues Leu-20, Arg-21, Gly-62, Lys-65, Thr-66, Thr-67, 128–130 (EDY), Arg-171, Tyr-181, and Arg-218. Residue Thr-66 participates in Mg(2+) binding. Residues 182 to 252 (DETQLKEIVI…EARDALELLE (71 aa)) form a small ATPAse domain (RuvB-S) region. Residues 255 to 344 (NQGFDKVDNK…SNKGQTSFFK (90 aa)) are head domain (RuvB-H). Positions 310 and 315 each coordinate DNA.

The protein belongs to the RuvB family. In terms of assembly, homohexamer. Forms an RuvA(8)-RuvB(12)-Holliday junction (HJ) complex. HJ DNA is sandwiched between 2 RuvA tetramers; dsDNA enters through RuvA and exits via RuvB. An RuvB hexamer assembles on each DNA strand where it exits the tetramer. Each RuvB hexamer is contacted by two RuvA subunits (via domain III) on 2 adjacent RuvB subunits; this complex drives branch migration. In the full resolvosome a probable DNA-RuvA(4)-RuvB(12)-RuvC(2) complex forms which resolves the HJ.

It localises to the cytoplasm. It catalyses the reaction ATP + H2O = ADP + phosphate + H(+). In terms of biological role, the RuvA-RuvB-RuvC complex processes Holliday junction (HJ) DNA during genetic recombination and DNA repair, while the RuvA-RuvB complex plays an important role in the rescue of blocked DNA replication forks via replication fork reversal (RFR). RuvA specifically binds to HJ cruciform DNA, conferring on it an open structure. The RuvB hexamer acts as an ATP-dependent pump, pulling dsDNA into and through the RuvAB complex. RuvB forms 2 homohexamers on either side of HJ DNA bound by 1 or 2 RuvA tetramers; 4 subunits per hexamer contact DNA at a time. Coordinated motions by a converter formed by DNA-disengaged RuvB subunits stimulates ATP hydrolysis and nucleotide exchange. Immobilization of the converter enables RuvB to convert the ATP-contained energy into a lever motion, pulling 2 nucleotides of DNA out of the RuvA tetramer per ATP hydrolyzed, thus driving DNA branch migration. The RuvB motors rotate together with the DNA substrate, which together with the progressing nucleotide cycle form the mechanistic basis for DNA recombination by continuous HJ branch migration. Branch migration allows RuvC to scan DNA until it finds its consensus sequence, where it cleaves and resolves cruciform DNA. The polypeptide is Holliday junction branch migration complex subunit RuvB (Clostridium botulinum (strain Eklund 17B / Type B)).